The primary structure comprises 207 residues: Urease accessory protein UreG (207 aa).

Residue 14–21 (GPVGSGKT) participates in GTP binding.

Belongs to the SIMIBI class G3E GTPase family. UreG subfamily. In terms of assembly, homodimer. UreD, UreF and UreG form a complex that acts as a GTP-hydrolysis-dependent molecular chaperone, activating the urease apoprotein by helping to assemble the nickel containing metallocenter of UreC. The UreE protein probably delivers the nickel.

The protein resides in the cytoplasm. In terms of biological role, facilitates the functional incorporation of the urease nickel metallocenter. This process requires GTP hydrolysis, probably effectuated by UreG. The sequence is that of Urease accessory protein UreG from Pseudomonas entomophila (strain L48).